The sequence spans 93 residues: UPF0058 protein AF_0738 (93 aa).

It belongs to the UPF0058 family.

This chain is UPF0058 protein AF_0738, found in Archaeoglobus fulgidus (strain ATCC 49558 / DSM 4304 / JCM 9628 / NBRC 100126 / VC-16).